The chain runs to 454 residues: Putative serine carboxypeptidase-like 23 (454 aa).

Residues 1–22 form the signal peptide; sequence MARIHLIIILLVISSTSSSSSS. N-linked (GlcNAc...) asparagine glycans are attached at residues N52, N102, and N136. Intrachain disulfides connect C85–C338, C247–C258, and C282–C306. The active site involves S178. N287 and N327 each carry an N-linked (GlcNAc...) asparagine glycan. Residues D375 and H427 contribute to the active site.

It belongs to the peptidase S10 family. As to expression, expression not detected.

Its subcellular location is the secreted. Functionally, probable carboxypeptidase. This chain is Putative serine carboxypeptidase-like 23 (SCPL23), found in Arabidopsis thaliana (Mouse-ear cress).